Consider the following 310-residue polypeptide: Vomeronasal type-1 receptor 50 (310 aa).

At 1 to 16 (MSKANLLHTDNNMKIT) the chain is on the extracellular side. Residues 17–37 (LFSEVSVGISANSILFVVHLC) form a helical membrane-spanning segment. Residues 38–50 (KLLHENKPKPIDL) are Cytoplasmic-facing. Residues 51–71 (YIAFFSITQLMLLITMGLIAV) traverse the membrane as a helical segment. Over 72-93 (DMFMPWGRWDSTTCQSLIYLHR) the chain is Extracellular. A disulfide bridge links C85 with C172. A helical membrane pass occupies residues 94 to 114 (LLRGLTFCATCLLNVLWTITL). The Cytoplasmic segment spans residues 115 to 134 (SPRSSCLTKFKHKSPHHISG). Residues 135–155 (AFLFFCVLYMSFSSHLLVSII) form a helical membrane-spanning segment. Over 156–193 (ATFNSTSDNFLYVTQSCSILPVSYSRTSILSTMMTMRE) the chain is Extracellular. N-linked (GlcNAc...) asparagine glycosylation occurs at N159. A helical membrane pass occupies residues 194 to 214 (AFLIGLMALSSGYVVVLLWRH). At 215–237 (KKQARHLHSTSLSSKASPEQRAT) the chain is on the cytoplasmic side. A helical transmembrane segment spans residues 238–258 (STIMLLMGFFVVLYILDTVIF). The Extracellular segment spans residues 259–269 (QARLKFKDVST). A helical membrane pass occupies residues 270 to 290 (FFCVKIIISHSYATFSPFVFI). At 291-310 (CNDKYMIKFVTSMCGRIVNV) the chain is on the cytoplasmic side.

It belongs to the G-protein coupled receptor 1 family. Expressed in a subset of sensory neurons located in the apical layer of the vomeronasal organ.

Its subcellular location is the cell membrane. Its function is as follows. Putative pheromone receptor implicated in the regulation of social and reproductive behavior. This Mus musculus (Mouse) protein is Vomeronasal type-1 receptor 50 (Vmn1r50).